Reading from the N-terminus, the 177-residue chain is Small ribosomal subunit protein uS5 (177 aa).

Residues 14-77 enclose the S5 DRBM domain; it reads LQEKLITVNR…EKARHNMIDI (64 aa).

It belongs to the universal ribosomal protein uS5 family. As to quaternary structure, part of the 30S ribosomal subunit. Contacts proteins S4 and S8.

In terms of biological role, with S4 and S12 plays an important role in translational accuracy. Its function is as follows. Located at the back of the 30S subunit body where it stabilizes the conformation of the head with respect to the body. The chain is Small ribosomal subunit protein uS5 from Blochmanniella floridana.